We begin with the raw amino-acid sequence, 1115 residues long: Receptor-type tyrosine-protein phosphatase H (1115 aa).

A signal peptide spans 1–27 (MAGAGGGLGVWGNLVLLGLCSWTGARA). The Extracellular segment spans residues 28-754 (PAPNPGRNLT…VVCHTESAGV (727 aa)). Fibronectin type-III domains follow at residues 32-121 (PGRN…APNP), 122-209 (VRNL…TAHN), 210-299 (PVRN…APNP), 300-387 (VRNL…TAPN), 388-477 (PVRN…VPNA), 478-563 (VTSL…TAAT), 564-666 (APNE…TYPD), and 665-749 (PDTV…VCHT). Residues asparagine 35, asparagine 83, asparagine 172, asparagine 256, asparagine 285, asparagine 350, asparagine 434, asparagine 468, asparagine 556, and asparagine 642 are each glycosylated (N-linked (GlcNAc...) asparagine). The chain crosses the membrane as a helical span at residues 755 to 775 (IAGAFVGILLFLILVGLLIFF). Topologically, residues 776-1115 (LKRRNKKKQQ…AAIQAHKLEV (340 aa)) are cytoplasmic. The Tyrosine-protein phosphatase domain occupies 820–1079 (FADEYQQLSL…VFLHQCILRF (260 aa)). Catalysis depends on cysteine 1020, which acts as the Phosphocysteine intermediate. Tyrosine 1094 and tyrosine 1102 each carry phosphotyrosine.

Belongs to the protein-tyrosine phosphatase family. Receptor class 3 subfamily. Homodimer; disulfide-linked. Interacts with LCK. Interacts (phosphorylated form) with GRB2 (via SH2 domain). Interacts (phosphorylated form) with FYN (via SH2 domain). Interacts (via extracellular domain) with CEACAM20 (via extracellular domain); the interaction dephosphorylates CEACAM20. In terms of tissue distribution, expressed at high levels in the brain, spleen and liver and at lower levels in the heart and stomach. Expressed in pancreatic and colorectal cancer cells, but not in normal pancreas or colon. Expression in hepatocellular carcinoma is related to the differentiation status of the tumor and expression is inversely related to tumor aggressiveness.

The protein localises to the cell projection. It localises to the microvillus membrane. It is found in the apical cell membrane. Its subcellular location is the cytoplasm. The enzyme catalyses O-phospho-L-tyrosyl-[protein] + H2O = L-tyrosyl-[protein] + phosphate. With respect to regulation, regulated by reversible dimerization. Dimerization reduces its catalytic activity. Protein phosphatase that may contribute to contact inhibition of cell growth and motility by mediating the dephosphorylation of focal adhesion-associated substrates and thus negatively regulating integrin-promoted signaling processes. Induces apoptotic cell death by at least two distinct mechanisms: inhibition of cell survival signaling mediated by PI 3-kinase, Akt, and ILK and activation of a caspase-dependent proapoptotic pathway. Inhibits the basal activity of LCK and its activation in response to TCR stimulation and TCR-induced activation of MAP kinase and surface expression of CD69. Inhibits TCR-induced tyrosine phosphorylation of LAT and ZAP70. Inhibits both basal activity of DOK1 and its CD2-induced tyrosine phosphorylation. Induces dephosphorylation of BCAR1, focal adhesion kinase and SRC. Reduces migratory activity of activity of Jurkat cells. Reduces tyrosine phosphorylation of CEACAM20 and thereby contributes to suppress the intestinal immune response CEACAM20. The polypeptide is Receptor-type tyrosine-protein phosphatase H (PTPRH) (Homo sapiens (Human)).